A 392-amino-acid chain; its full sequence is ATP phosphoribosyltransferase regulatory subunit (392 aa).

The protein belongs to the class-II aminoacyl-tRNA synthetase family. HisZ subfamily. As to quaternary structure, heteromultimer composed of HisG and HisZ subunits.

Its subcellular location is the cytoplasm. It participates in amino-acid biosynthesis; L-histidine biosynthesis; L-histidine from 5-phospho-alpha-D-ribose 1-diphosphate: step 1/9. In terms of biological role, required for the first step of histidine biosynthesis. May allow the feedback regulation of ATP phosphoribosyltransferase activity by histidine. The polypeptide is ATP phosphoribosyltransferase regulatory subunit (Geobacillus sp. (strain WCH70)).